The following is a 637-amino-acid chain: Probable potassium transport system protein Kup (637 aa).

12 helical membrane-spanning segments follow: residues 25 to 45, 62 to 82, 115 to 135, 149 to 169, 180 to 200, 227 to 247, 263 to 283, 295 to 315, 352 to 372, 378 to 398, 410 to 430, and 434 to 454; these read ISLA…LYAI, VLGV…LKYL, WFLV…GMIT, IIAP…LTGL, VGAL…VLGL, LQGF…EALY, ILFV…LLLF, LVPS…TIIA, IYVP…VIGF, LAAA…ILFY, LATN…FGAS, and LFHG…LMLT.

It belongs to the HAK/KUP transporter (TC 2.A.72) family.

It localises to the cell inner membrane. The catalysed reaction is K(+)(in) + H(+)(in) = K(+)(out) + H(+)(out). Its function is as follows. Transport of potassium into the cell. Likely operates as a K(+):H(+) symporter. The polypeptide is Probable potassium transport system protein Kup (Chlorobium phaeobacteroides (strain DSM 266 / SMG 266 / 2430)).